Reading from the N-terminus, the 390-residue chain is Manganese peroxidase 2 (390 aa).

An N-terminal signal peptide occupies residues 1–23; that stretch reads MAFNFAAILAFVSLAAVTSAAPS. 5 disulfide bridges follow: cysteine 27-cysteine 39, cysteine 38-cysteine 313, cysteine 57-cysteine 141, cysteine 277-cysteine 343, and cysteine 365-cysteine 372. Mn(2+)-binding residues include glutamate 59 and glutamate 63. Histidine 70 acts as the Proton acceptor in catalysis. Ca(2+) is bound by residues aspartate 71, glycine 86, aspartate 88, and serine 90. N-linked (GlcNAc...) asparagine glycosylation occurs at asparagine 155. Position 197 (histidine 197) interacts with heme b. Ca(2+) is bound at residue serine 198. A Mn(2+)-binding site is contributed by aspartate 203. Ca(2+) contacts are provided by aspartate 215, threonine 217, and aspartate 222. The N-linked (GlcNAc...) asparagine glycan is linked to asparagine 241.

It belongs to the peroxidase family. Ligninase subfamily. The cofactor is heme b. Requires Ca(2+) as cofactor.

It localises to the secreted. It catalyses the reaction 2 Mn(2+) + H2O2 + 2 H(+) = 2 Mn(3+) + 2 H2O. In terms of biological role, catalyzes the oxidation of Mn(2+) to Mn(3+). The latter, acting as a diffusible redox mediator, is capable of oxidizing a variety of lignin compounds. This Phlebia radiata (White-rot fungus) protein is Manganese peroxidase 2 (mnp2).